Here is a 1039-residue protein sequence, read N- to C-terminus: L-arabinokinase (1039 aa).

Residues Ala662–Val678 form a helical membrane-spanning segment. Residue Pro693–Ala703 coordinates ATP. Asp745 serves as the catalytic Proton acceptor.

It belongs to the GHMP kinase family.

Its subcellular location is the membrane. It carries out the reaction L-arabinose + ATP = beta-L-arabinose 1-phosphate + ADP + H(+). In terms of biological role, arabinose kinase. Involved in the salvage pathway which converts free L-arabinose to UDP-L-arabinose. May play a role in arabinose transport. This chain is L-arabinokinase (ARA1), found in Arabidopsis thaliana (Mouse-ear cress).